Here is a 315-residue protein sequence, read N- to C-terminus: 4-hydroxy-3-methylbut-2-enyl diphosphate reductase (315 aa).

A [4Fe-4S] cluster-binding site is contributed by cysteine 12. Residues histidine 41 and histidine 74 each coordinate (2E)-4-hydroxy-3-methylbut-2-enyl diphosphate. Residues histidine 41 and histidine 74 each coordinate dimethylallyl diphosphate. Histidine 41 and histidine 74 together coordinate isopentenyl diphosphate. Cysteine 96 contacts [4Fe-4S] cluster. A (2E)-4-hydroxy-3-methylbut-2-enyl diphosphate-binding site is contributed by histidine 124. Residue histidine 124 coordinates dimethylallyl diphosphate. Histidine 124 lines the isopentenyl diphosphate pocket. Catalysis depends on glutamate 126, which acts as the Proton donor. A (2E)-4-hydroxy-3-methylbut-2-enyl diphosphate-binding site is contributed by threonine 168. Cysteine 198 is a binding site for [4Fe-4S] cluster. (2E)-4-hydroxy-3-methylbut-2-enyl diphosphate-binding residues include serine 226, serine 227, asparagine 228, and serine 270. Dimethylallyl diphosphate contacts are provided by serine 226, serine 227, asparagine 228, and serine 270. Isopentenyl diphosphate-binding residues include serine 226, serine 227, asparagine 228, and serine 270.

It belongs to the IspH family. It depends on [4Fe-4S] cluster as a cofactor.

The enzyme catalyses isopentenyl diphosphate + 2 oxidized [2Fe-2S]-[ferredoxin] + H2O = (2E)-4-hydroxy-3-methylbut-2-enyl diphosphate + 2 reduced [2Fe-2S]-[ferredoxin] + 2 H(+). The catalysed reaction is dimethylallyl diphosphate + 2 oxidized [2Fe-2S]-[ferredoxin] + H2O = (2E)-4-hydroxy-3-methylbut-2-enyl diphosphate + 2 reduced [2Fe-2S]-[ferredoxin] + 2 H(+). It functions in the pathway isoprenoid biosynthesis; dimethylallyl diphosphate biosynthesis; dimethylallyl diphosphate from (2E)-4-hydroxy-3-methylbutenyl diphosphate: step 1/1. It participates in isoprenoid biosynthesis; isopentenyl diphosphate biosynthesis via DXP pathway; isopentenyl diphosphate from 1-deoxy-D-xylulose 5-phosphate: step 6/6. Its function is as follows. Catalyzes the conversion of 1-hydroxy-2-methyl-2-(E)-butenyl 4-diphosphate (HMBPP) into a mixture of isopentenyl diphosphate (IPP) and dimethylallyl diphosphate (DMAPP). Acts in the terminal step of the DOXP/MEP pathway for isoprenoid precursor biosynthesis. This Pseudomonas entomophila (strain L48) protein is 4-hydroxy-3-methylbut-2-enyl diphosphate reductase.